The primary structure comprises 5161 residues: Nonribosomal peptide synthetase TES (5161 aa).

The adenylation 1 stretch occupies residues 37–436; it reads EEQAIARPNA…GRKDSQTKVR (400 aa). The region spanning 569 to 645 is the Carrier 1 domain; that stretch reads QPETEKEQIL…KLTSAAIPSV (77 aa). S606 carries the post-translational modification O-(pantetheine 4'-phosphoryl)serine. The segment at 659–1098 is condensation 1; sequence GHVAQSFAQG…LLCDVELSKL (440 aa). Positions 1122 to 1522 are adenylation 2; the sequence is RQQTSLCPSR…GRMDGQVKIR (401 aa). The methyltransferase (M) domain 1 stretch occupies residues 1630-1742; it reads MNEWLDDTID…YLFKTTQQLL (113 aa). Residues 2068–2141 form the Carrier 2 domain; it reads TRAESKIQQL…QLAAVAQEHV (74 aa). Residue S2102 is modified to O-(pantetheine 4'-phosphoryl)serine. The interval 2179 to 2593 is condensation 2; it reads EDIYPCSPLQ…MLTQDDEQQL (415 aa). The segment at 2614-3010 is adenylation 3; sequence DQAKSRPEAD…GRKDGQVKVR (397 aa). Positions 3139 to 3215 constitute a Carrier 3 domain; the sequence is KPETKHEMAL…RLANRLVDPP (77 aa). An O-(pantetheine 4'-phosphoryl)serine modification is found at S3176. The segment at 3232 to 3668 is condensation 3; that stretch reads LQSFAQGRLW…VVPLMTVEAH (437 aa). The tract at residues 3694–4098 is adenylation 4; it reads FRQQAAMQPS…GRIDGQVKIR (405 aa). A methyltransferase (M) domain 2 region spans residues 4203 to 4329; it reads EMKEWLEETI…KVDGVKTLFF (127 aa). Residues 4643–4725 enclose the Carrier 4 domain; it reads RELSTAELKV…QFSQHEGEQK (83 aa). S4680 carries the post-translational modification O-(pantetheine 4'-phosphoryl)serine. A condensation 4 region spans residues 4785-5093; sequence FFLNLGTRVD…HQNLNEHPEF (309 aa).

The protein belongs to the NRP synthetase family.

Its pathway is phytotoxin biosynthesis. Its function is as follows. Nonribosomal peptide synthetase; part of the gene cluster that mediates the biosynthesis of the phytotoxin tentoxin, an inhibitor the F1-ATPase activity of chloroplasts, resulting in chlorosis in sensitive plants. Tentoxin is a cyclic tetrapeptide that consists of four amino acid residues: glycine (Gly), alanine (Ala), leucine (Leu), and dehydrophenylalanine (DPhe). In addition, both the Ala and DPhe residues are N-methylated. The nonribosomal peptide synthetase TES assembles tentoxin from the four substrate amino acids. The adenylation domains of each of the 4 modules are responsible for the activation of Gly, Ala, Leu and DPhe, respectively. In addition, the N-methyltransferase domains in the second and fourth modules of TES could be responsible for N-methylation of Ala and DPhe residues. Finally, the condensation domain located in the termination module probably catalyzes the formation of the intramolecular macrocyclization and then the release of tentoxin. The cytochrome P450 monooxygenase TES1 is predicted to be involved in the formation of DPhe. This is Nonribosomal peptide synthetase TES from Alternaria alternata (Alternaria rot fungus).